The following is a 152-amino-acid chain: Protein SprT-like (152 aa).

The SprT-like domain maps to 6-151 (LQQLVCRISL…SKCLGKLELL (146 aa)). His-67 serves as a coordination point for Zn(2+). Glu-68 is a catalytic residue. Residue His-71 participates in Zn(2+) binding.

Belongs to the SprT family. It depends on Zn(2+) as a cofactor.

The protein resides in the cytoplasm. In Lysinibacillus sphaericus (strain C3-41), this protein is Protein SprT-like.